A 354-amino-acid polypeptide reads, in one-letter code: MVGAVIDLFCGVGGLTHGLILEGFGVLAGIDNDPSCKYAYEQNNRTRFIEKSISEVDGRELNALYPNNQHKILVGCAPCQDFSQYTKKSRTGTKWQLLTEFSRLIREIEPDIISMENVPEVRTFNRGEVFNNFIQSLEQLGYHVSHSVVHCPDYGIPQQRDRLVLFAAKQGVIKIIPPTHTPENYRTVRDVIGSLATNYSGGHWEGDSMHAASRLEDINLRRIQHSVPGGTWADWPEELIAECHKKESGESYGSVYGRMEWDKVAPTITTQCNGYGNGRFGHPEQDRAISLREAALLQTFPRSYQFAPEGQLKFKTVSRQIGNAVPVALGRVIAKSIKRFLEGLHERQRVRIII.

The 342-residue stretch at 3 to 344 (GAVIDLFCGV…KSIKRFLEGL (342 aa)) folds into the SAM-dependent MTase C5-type domain. Residue Cys79 is part of the active site.

Belongs to the class I-like SAM-binding methyltransferase superfamily. C5-methyltransferase family.

The enzyme catalyses a 2'-deoxycytidine in DNA + S-adenosyl-L-methionine = a 5-methyl-2'-deoxycytidine in DNA + S-adenosyl-L-homocysteine + H(+). In terms of biological role, a methylase that recognizes the double-stranded sequence 5'-GTCGAC-3', methylates C-? on both strands and protects the DNA from cleavage by the HgiDII endonuclease. This chain is Type II methylase M.HgiDII, found in Herpetosiphon aurantiacus (Herpetosiphon giganteus).